The following is a 252-amino-acid chain: tRNA-cytidine(32) 2-sulfurtransferase (252 aa).

The PP-loop motif signature appears at 37 to 42 (SGGKDS). [4Fe-4S] cluster contacts are provided by cysteine 112, cysteine 115, and cysteine 202.

Belongs to the TtcA family. As to quaternary structure, homodimer. It depends on Mg(2+) as a cofactor. Requires [4Fe-4S] cluster as cofactor.

The protein resides in the cytoplasm. The catalysed reaction is cytidine(32) in tRNA + S-sulfanyl-L-cysteinyl-[cysteine desulfurase] + AH2 + ATP = 2-thiocytidine(32) in tRNA + L-cysteinyl-[cysteine desulfurase] + A + AMP + diphosphate + H(+). Its pathway is tRNA modification. Functionally, catalyzes the ATP-dependent 2-thiolation of cytidine in position 32 of tRNA, to form 2-thiocytidine (s(2)C32). The sulfur atoms are provided by the cysteine/cysteine desulfurase (IscS) system. This is tRNA-cytidine(32) 2-sulfurtransferase from Geotalea daltonii (strain DSM 22248 / JCM 15807 / FRC-32) (Geobacter daltonii).